Reading from the N-terminus, the 359-residue chain is MAKSPETELPLKAFGWAARDTSGTLSPFHFSRRENGDDDVSVKILYCGVCHSDLHTLKNDWGFTTYPVVPGHEIVGVVTKVGINVKKFRVGDNVGVGVIVESCQTCENCNQDLEQYCPKPVFTYNSPYKGTRTYGGYSDFVVVHQRYVVQFPDNLPLDAGAPLLCAGITVYSPMKYYGMTEPGKHLGVAGLGGLGHVAIKFGKAFGLKVTVISTSPNKETEAIDKLGADSFLVSKDPEKMKAAMGTMDYIIDTISAAHSLMPLLGLLKLNGKLVTVGLPSKPLELSVFPLVAGRKLIGGSNIGGMKETQEMLDFCGKHNITADIELIKMHEINTAMERLHKADVKYRFVIDVANSFSSL.

Cysteine 50, histidine 72, cysteine 103, cysteine 106, cysteine 109, cysteine 117, and cysteine 165 together coordinate Zn(2+).

This sequence belongs to the zinc-containing alcohol dehydrogenase family. Zn(2+) serves as cofactor.

It carries out the reaction D-mannitol + NAD(+) = D-mannose + NADH + H(+). Functionally, oxidizes mannitol to mannose. Provides the initial step by which translocated mannitol is committed to central metabolism and, by regulating mannitol pool size, is important in regulating salt tolerance at the cellular level. The polypeptide is Probable mannitol dehydrogenase (CAD1) (Medicago sativa (Alfalfa)).